Consider the following 278-residue polypeptide: Orotidine 5'-phosphate decarboxylase (278 aa).

Lys-95 functions as the Proton donor in the catalytic mechanism.

It belongs to the OMP decarboxylase family. Type 2 subfamily.

It catalyses the reaction orotidine 5'-phosphate + H(+) = UMP + CO2. The protein operates within pyrimidine metabolism; UMP biosynthesis via de novo pathway; UMP from orotate: step 2/2. This is Orotidine 5'-phosphate decarboxylase from Corynebacterium glutamicum (strain ATCC 13032 / DSM 20300 / JCM 1318 / BCRC 11384 / CCUG 27702 / LMG 3730 / NBRC 12168 / NCIMB 10025 / NRRL B-2784 / 534).